Reading from the N-terminus, the 430-residue chain is Alpha-humulene synthase asR6 (430 aa).

It belongs to the terpene synthase family. Alpha-humulene synthase eupE subfamily. It depends on Mg(2+) as a cofactor.

It catalyses the reaction (2E,6E)-farnesyl diphosphate = alpha-humulene + diphosphate. The protein operates within secondary metabolite biosynthesis; terpenoid biosynthesis. In terms of biological role, alpha-humulene synthase; part of the gene cluster that mediates the biosynthesis of xenovulene A, an unusual meroterpenoid that has potent inhibitory effects on the human gamma-aminobutyrate A (GABAA) benzodiazepine receptor. The first step of xenovulene A biosynthesis is the biosynthesis of 3-methylorcinaldehyde performed by the non-reducing polyketide synthase aspks1. The salicylate hydroxylase asL1 then catalyzes the oxidative dearomatization of 3-methylorcinaldehyde to yield a dearomatized hydroxycyclohexadione. The 2-oxoglutarate-dependent dioxygenase asL3 further catalyzes the oxidative ring expansion to provide the first tropolone metabolite. The cytochrome P450 monooxygenase asR2 allows the synthesis of tropolone hemiacetal. In parallel, a previously unrecognised class of terpene cyclase, asR6, produces alpha-humulene from farnesylpyrophosphate (FPP). The putative Diels-Alderase asR5 probably catalyzes the formation of the tropolone-humulene skeleton by linking humulene and the polyketide moiety. Oxidative-ring contractions catalyzed by asL4 and asL6 then processively remove carbon atoms from the polyketide to yield xenovulene A. The chain is Alpha-humulene synthase asR6 from Sarocladium schorii (Acremonium strictum (strain IMI 501407)).